A 1241-amino-acid chain; its full sequence is RNA polymerase II C-terminal domain phosphatase-like 3 (1241 aa).

Disordered stretches follow at residues 361–402 (DHDA…TTEG), 428–470 (VFKT…HLIY), 505–525 (ISAPTASDQTVKPSAKSRDPR), 578–598 (KRQKSDTDAPKAAGTGGWLED), 677–702 (AIQKPMDPRRAAQLPGSSVQPGVSTP), 720–800 (VLQD…QNGT), and 852–885 (TERDVKHNPSNPNAQDEDVSVSAASVTAAAGPTR). Positions 368–378 (PSPTRETTPSL) are enriched in polar residues. Positions 441–466 (GEPNDGNGDVGGEVSSSVVKSSNPGS) are enriched in low complexity. Residues 677-686 (AIQKPMDPRR) are compositionally biased toward basic and acidic residues. Polar residues-rich tracts occupy residues 691–702 (PGSSVQPGVSTP) and 791–800 (PRQNISQNGT). Positions 871 to 881 (SVSAASVTAAA) are enriched in low complexity. An FCP1 homology domain is found at 923-1103 (FASQKLSLVL…GLLGPSLLEL (181 aa)). A BRCT domain is found at 1146–1239 (EQRKILAGCR…QRANENLYAI (94 aa)).

In terms of assembly, interacts with RAP74. The cofactor is Mg(2+). Co(2+) serves as cofactor. Requires Mn(2+) as cofactor.

The protein resides in the nucleus. It carries out the reaction O-phospho-L-seryl-[protein] + H2O = L-seryl-[protein] + phosphate. It catalyses the reaction O-phospho-L-threonyl-[protein] + H2O = L-threonyl-[protein] + phosphate. Its function is as follows. Completely dephosphorylates 'Ser-2', and partially 'Ser-5' and 'Ser-7' of the heptad repeats YSPTSPS in the C-terminal domain (CTD) of the largest RNA polymerase II subunit (RPB1). Involved in defense response. Acts as a negative regulator of immune gene expression and immunity to pathogen infections. Preferentially dephosphorylates 'Ser-2' of RNA polymerase II CTD. This counterregulates the MAP kinase (MAPK) or cyclin-dependent kinase C (CDKC)-mediated phosphorylation of CTD in response to pathogens and upon perception of microbe-associated molecular patterns (MAMPs). MAPKs phosphorylate and activate CDKCs, which are CTD kinases that positively regulate plant innate immunity. Acts as a negative regulator of stress gene transcription involved in abscisic acid (ABA) mediated signaling pathway and cold resistance. Acts as a post-transcriptional gene silencing (PTGS) suppressor. The polypeptide is RNA polymerase II C-terminal domain phosphatase-like 3 (Arabidopsis thaliana (Mouse-ear cress)).